A 237-amino-acid polypeptide reads, in one-letter code: Insulin-like growth factor-binding protein 6 (237 aa).

A signal peptide spans Met1 to Ala25. Residues Arg26–Ala105 enclose the IGFBP N-terminal domain. Intrachain disulfides connect Cys27-Cys30, Cys38-Cys42, Cys55-Cys61, Cys69-Cys82, and Cys76-Cys102. The tract at residues Arg101–Pro158 is disordered. The span at Arg135–Val151 shows a compositional bias: polar residues. A Thyroglobulin type-1 domain is found at Met156–Cys231. Disulfide bonds link Cys159-Cys186, Cys197-Cys208, and Cys210-Cys231. Residues Gly215 to Gly237 form a disordered region.

Interacts (via C-terminal domain) with PHB2. Post-translationally, O-glycosylated.

It localises to the secreted. Its function is as follows. IGF-binding proteins prolong the half-life of the IGFs and have been shown to either inhibit or stimulate the growth promoting effects of the IGFs on cell culture. They alter the interaction of IGFs with their cell surface receptors. Activates the MAPK signaling pathway and induces cell migration. The chain is Insulin-like growth factor-binding protein 6 (IGFBP6) from Bos taurus (Bovine).